A 431-amino-acid chain; its full sequence is COBRA-like protein 4 (431 aa).

The first 20 residues, 1 to 20 (MRLLFSFCFFFFMIIFTATA), serve as a signal peptide directing secretion. 8 N-linked (GlcNAc...) asparagine glycosylation sites follow: Asn-29, Asn-154, Asn-162, Asn-201, Asn-226, Asn-306, Asn-321, and Asn-340. The GPI-anchor amidated asparagine moiety is linked to residue Asn-414. The propeptide at 415–431 (FASFSLTILLLLFISIW) is removed in mature form.

Belongs to the COBRA family. As to expression, expressed in roots, stems, leaves, flowers and siliques.

Its subcellular location is the cell membrane. This Arabidopsis thaliana (Mouse-ear cress) protein is COBRA-like protein 4 (COBL4).